The following is a 124-amino-acid chain: uncharacterized protein (124 aa).

Helical transmembrane passes span 14–34 (KAIV…YGWQ), 41–61 (FSYG…IIFY), and 85–105 (MVFI…AFFV).

The protein resides in the cell membrane. This is an uncharacterized protein from Haemophilus influenzae (strain ATCC 51907 / DSM 11121 / KW20 / Rd).